Reading from the N-terminus, the 293-residue chain is MATH domain and coiled-coil domain-containing protein At3g58400 (293 aa).

One can recognise an MATH domain in the interval 3–126; that stretch reads RSRSQNLITE…NGELKIVAEI (124 aa). Residues 227 to 285 adopt a coiled-coil conformation; the sequence is KLDWLENKLYEVAQKKEDDEAGETRLREMEEKLKDLKLKCSKMEALVEEEKAKVSAAKA.

In Arabidopsis thaliana (Mouse-ear cress), this protein is MATH domain and coiled-coil domain-containing protein At3g58400.